A 706-amino-acid chain; its full sequence is G2/M phase-specific E3 ubiquitin-protein ligase (706 aa).

The C2HC pre-PHD-type zinc finger occupies 11–51; sequence NLACVFCRKNDDCPNKYGEKKTKEKWNLTVHYYCLLMSSGI. The PHD-type 1 zinc-finger motif lies at 79 to 128; it reads LKCCVCKKNGASIGCVAPRCKRSYHFPCGLQRECIFQFTGNFASFCWNHR. The segment at 143 to 193 adopts a PHD-type 2; degenerate zinc-finger fold; it reads PCTICLEFIEPIPSYNILRSPCCKNAWFHRDCLQVQAINAGVFFFRCTICS. A PHD-type 3 zinc finger spans residues 237-286; it reads RCRCKEGRDYNAPDSKWEIKRCQCCGSSGTHLACSSLRSWEQNWECLECR. In terms of domain architecture, HECT spans 371–698; it reads IWTSALDAFR…IRNTLKLEKE (328 aa).

The protein localises to the nucleus. It localises to the nucleolus. The protein resides in the cytoplasm. It catalyses the reaction S-ubiquitinyl-[E2 ubiquitin-conjugating enzyme]-L-cysteine + [acceptor protein]-L-lysine = [E2 ubiquitin-conjugating enzyme]-L-cysteine + N(6)-ubiquitinyl-[acceptor protein]-L-lysine.. Its pathway is protein modification; protein ubiquitination. In terms of biological role, E3 ubiquitin-protein ligase which accepts ubiquitin from an E2 ubiquitin-conjugating enzyme in the form of a thioester and then directly transfers the ubiquitin to targeted substrates. Essential in early embryonic development to prevent apoptotic death. This chain is G2/M phase-specific E3 ubiquitin-protein ligase (G2E3), found in Macaca fascicularis (Crab-eating macaque).